Reading from the N-terminus, the 294-residue chain is Flavin-dependent thymidylate synthase (294 aa).

The region spanning 27-250 (GFIRVIDYMG…PFTYEAFEEY (224 aa)) is the ThyX domain. Residues Thr73, 96 to 98 (RHR), and Glu104 each bind FAD. DUMP contacts are provided by residues 93-96 (QWIR), 104-108 (EYSAR), and Arg189. A ThyX motif motif is present at residues 96 to 106 (RHRTASVNEYS). FAD contacts are provided by residues 205-207 (NLH) and His211. Arg216 provides a ligand contact to dUMP. Arg216 functions as the Involved in ionization of N3 of dUMP, leading to its activation in the catalytic mechanism.

The protein belongs to the thymidylate synthase ThyX family. As to quaternary structure, homotetramer. It depends on FAD as a cofactor.

The catalysed reaction is dUMP + (6R)-5,10-methylene-5,6,7,8-tetrahydrofolate + NADPH + H(+) = dTMP + (6S)-5,6,7,8-tetrahydrofolate + NADP(+). Its pathway is pyrimidine metabolism; dTTP biosynthesis. In terms of biological role, catalyzes the reductive methylation of 2'-deoxyuridine-5'-monophosphate (dUMP) to 2'-deoxythymidine-5'-monophosphate (dTMP) while utilizing 5,10-methylenetetrahydrofolate (mTHF) as the methyl donor, and NADPH and FADH(2) as the reductant. This is Flavin-dependent thymidylate synthase from Rickettsia bellii (strain RML369-C).